Reading from the N-terminus, the 690-residue chain is Ectopic P granules protein 2 (690 aa).

Coiled coils occupy residues 20–181, 359–409, 458–494, and 560–643; these read IELA…EREV, ELLR…TIQE, LESGKKKHANEILTVRNELEQSNAAHQSLRDQCSLLL, and ATIE…ETKR. Positions 61-64 match the LIR 1 motif; sequence YSTL. The segment at 381–385 is required for interaction with lgg-1; the sequence is DFKIL. Positions 666 to 690 are disordered; the sequence is EELDEEPKASTESEEKAEWEMVDEE. Over residues 671-684 the composition is skewed to basic and acidic residues; it reads EPKASTESEEKAEW. The LIR 2 motif lies at 684 to 687; the sequence is WEMV.

As to quaternary structure, interacts with sepa-1. Interacts (via the LIR motifs) with lgg-1 and lgg-2. Shows strong interaction with lgg-1 and weak interaction with lgg-2.

Its subcellular location is the cytoplasm. Involved in autophagy. Thought to act as an adapter protein that brings PGL granules to autophagic structures containing lgg-1. Association with other adapters such as sepa-1 is required for the accumulation and degradation of germ cell specific P-granules by autophagy in somatic cells. This ensures exclusive localization of the P-granules in germ cells. May also play a role in the removal of sepa-1 from somatic cells. The sequence is that of Ectopic P granules protein 2 from Caenorhabditis elegans.